We begin with the raw amino-acid sequence, 726 residues long: Catalase-peroxidase (726 aa).

The interval 1–33 (MSTSDDIHNTTATGKCPFHQGGHDQSAGGGTTT) is disordered. The tryptophyl-tyrosyl-methioninium (Trp-Tyr) (with M-252) cross-link spans 105–226 (WHGAGTYRSI…LGATEMGLIY (122 aa)). His106 (proton acceptor) is an active-site residue. A cross-link (tryptophyl-tyrosyl-methioninium (Tyr-Met) (with W-105)) is located at residues 226–252 (YVNPEGPDHSGEPLSAAAAIRATFGNM). His267 serves as a coordination point for heme b.

The protein belongs to the peroxidase family. Peroxidase/catalase subfamily. Homodimer or homotetramer. Requires heme b as cofactor. Formation of the three residue Trp-Tyr-Met cross-link is important for the catalase, but not the peroxidase activity of the enzyme.

It carries out the reaction H2O2 + AH2 = A + 2 H2O. The catalysed reaction is 2 H2O2 = O2 + 2 H2O. Its function is as follows. Bifunctional enzyme with both catalase and broad-spectrum peroxidase activity. The chain is Catalase-peroxidase from Escherichia coli O1:K1 / APEC.